Consider the following 182-residue polypeptide: Troponin I, fast skeletal muscle (182 aa).

Residue Gly2 is modified to N-acetylglycine. The tract at residues 2–48 (GDEEKRNRAITARRQHLKSVMLQIAATELEKEESRRESEKQNYLSEH) is involved in binding TNC. Thr12 carries the phosphothreonine modification. Over residues 29–41 (ELEKEESRRESEK) the composition is skewed to basic and acidic residues. The interval 29–53 (ELEKEESRRESEKQNYLSEHCPPLH) is disordered. The tract at residues 97-117 (NQKLFDLRGKFKRPPLRRVRM) is involved in binding TNC and actin. At Ser118 the chain carries Phosphoserine.

Belongs to the troponin I family. In terms of assembly, binds to actin and tropomyosin.

Functionally, troponin I is the inhibitory subunit of troponin, the thin filament regulatory complex which confers calcium-sensitivity to striated muscle actomyosin ATPase activity. The protein is Troponin I, fast skeletal muscle (Tnni2) of Rattus norvegicus (Rat).